The chain runs to 212 residues: Ribonuclease HII (212 aa).

Residues 18 to 212 (GCVFGVDEAG…APVAQQELFR (195 aa)) enclose the RNase H type-2 domain. A divalent metal cation is bound by residues D24, E25, and D118.

Belongs to the RNase HII family. Mn(2+) serves as cofactor. It depends on Mg(2+) as a cofactor.

It is found in the cytoplasm. It catalyses the reaction Endonucleolytic cleavage to 5'-phosphomonoester.. Functionally, endonuclease that specifically degrades the RNA of RNA-DNA hybrids. The chain is Ribonuclease HII from Erythrobacter litoralis (strain HTCC2594).